A 238-amino-acid chain; its full sequence is MKGRSLNTEDRARLEAAIGYRFAEKERLDRALTHSSARSGRAINYQRLEFLGDRVLGLCVAELLFQTFTDANEGELSVRLNQLVSAESCAKVADELSLHEFIRTGSDVKKITGKHMMNVRADVVESLIAAIYLDGGLDAARRFVLEHWTHRAASADGARRDAKTELQEWAHAKFGVAPKYRTDDRSGPDHDPRFTVTVEVDGIAPETGVDRSKRGAEQVAAMKLLEREGVWQKRSAGN.

Residues 11–136 (RARLEAAIGY…LIAAIYLDGG (126 aa)) enclose the RNase III domain. Glu49 is a binding site for Mg(2+). Residue Asp53 is part of the active site. Asp122 and Glu125 together coordinate Mg(2+). Glu125 is a catalytic residue. The 70-residue stretch at 161–230 (DAKTELQEWA…AMKLLEREGV (70 aa)) folds into the DRBM domain.

It belongs to the ribonuclease III family. As to quaternary structure, homodimer. It depends on Mg(2+) as a cofactor.

The protein localises to the cytoplasm. The catalysed reaction is Endonucleolytic cleavage to 5'-phosphomonoester.. Its function is as follows. Digests double-stranded RNA. Involved in the processing of primary rRNA transcript to yield the immediate precursors to the large and small rRNAs (23S and 16S). Processes some mRNAs, and tRNAs when they are encoded in the rRNA operon. Processes pre-crRNA and tracrRNA of type II CRISPR loci if present in the organism. This chain is Ribonuclease 3, found in Rhizobium meliloti (strain 1021) (Ensifer meliloti).